A 218-amino-acid chain; its full sequence is Hypoxanthine-guanine phosphoribosyltransferase (218 aa).

Residue lysine 69 participates in GMP binding. Position 103 is an N6-acetyllysine (lysine 103). Lysine 115 participates in a covalent cross-link: Glycyl lysine isopeptide (Lys-Gly) (interchain with G-Cter in SUMO1); alternate. Residue lysine 115 forms a Glycyl lysine isopeptide (Lys-Gly) (interchain with G-Cter in SUMO2); alternate linkage. GMP-binding positions include 134-142 (EDIIDTGKT), lysine 166, 186-188 (KFV), and aspartate 194. Aspartate 138 (proton acceptor) is an active-site residue. Threonine 142 is modified (phosphothreonine). Residue aspartate 194 coordinates Mg(2+).

It belongs to the purine/pyrimidine phosphoribosyltransferase family. As to quaternary structure, homotetramer. Requires Mg(2+) as cofactor.

It is found in the cytoplasm. The enzyme catalyses IMP + diphosphate = hypoxanthine + 5-phospho-alpha-D-ribose 1-diphosphate. The catalysed reaction is GMP + diphosphate = guanine + 5-phospho-alpha-D-ribose 1-diphosphate. It functions in the pathway purine metabolism; IMP biosynthesis via salvage pathway; IMP from hypoxanthine: step 1/1. In terms of biological role, converts guanine to guanosine monophosphate, and hypoxanthine to inosine monophosphate. Transfers the 5-phosphoribosyl group from 5-phosphoribosylpyrophosphate onto the purine. Plays a central role in the generation of purine nucleotides through the purine salvage pathway. This chain is Hypoxanthine-guanine phosphoribosyltransferase (Hprt1), found in Rattus norvegicus (Rat).